We begin with the raw amino-acid sequence, 381 residues long: Cytochrome b (381 aa).

The next 4 helical transmembrane spans lie at 34-54 (FGSLLATCLALQIITGIFLAM), 78-99 (WLIRNMHANGASLFFMCIYLHI), 114-134 (WNTGIILLLLVMATAFVGYVL), and 179-199 (FFTFHFLLPFAITGLTAVHLL). Heme b is bound by residues H84 and H98. Heme b-binding residues include H183 and H197. An a ubiquinone-binding site is contributed by H202. 4 helical membrane passes run 227–247 (YKDLLGLILMLTFLLTLTLFS), 289–309 (LGGVLALLFSILILFLMPTLH), 321–341 (LTQILFWSLVADLLVLTWIGG), and 348–368 (FIIIGQVASTFYFLILLLLMP).

It belongs to the cytochrome b family. In terms of assembly, the cytochrome bc1 complex contains 3 respiratory subunits (MT-CYB, CYC1 and UQCRFS1), 2 core proteins (UQCRC1 and UQCRC2) and probably 6 low-molecular weight proteins. Requires heme b as cofactor.

It localises to the mitochondrion inner membrane. Its function is as follows. Component of the ubiquinol-cytochrome c reductase complex (complex III or cytochrome b-c1 complex) that is part of the mitochondrial respiratory chain. The b-c1 complex mediates electron transfer from ubiquinol to cytochrome c. Contributes to the generation of a proton gradient across the mitochondrial membrane that is then used for ATP synthesis. This chain is Cytochrome b (MT-CYB), found in Chelonia mydas (Green sea-turtle).